The sequence spans 112 residues: Ribosome-binding factor A (112 aa).

The protein belongs to the RbfA family. In terms of assembly, monomer. Binds 30S ribosomal subunits, but not 50S ribosomal subunits or 70S ribosomes.

It localises to the cytoplasm. Its function is as follows. One of several proteins that assist in the late maturation steps of the functional core of the 30S ribosomal subunit. Associates with free 30S ribosomal subunits (but not with 30S subunits that are part of 70S ribosomes or polysomes). Required for efficient processing of 16S rRNA. May interact with the 5'-terminal helix region of 16S rRNA. The chain is Ribosome-binding factor A from Mycoplasma genitalium (strain ATCC 33530 / DSM 19775 / NCTC 10195 / G37) (Mycoplasmoides genitalium).